Consider the following 545-residue polypeptide: Indole-3-pyruvate decarboxylase (545 aa).

Position 48 (glutamate 48) interacts with thiamine diphosphate. Residues 382–460 form a thiamine pyrophosphate binding region; sequence DCLFTAMDMI…VILFNNASWE (79 aa). Aspartate 429 and asparagine 456 together coordinate Mg(2+).

Belongs to the TPP enzyme family. It depends on a metal cation as a cofactor. Thiamine diphosphate is required as a cofactor.

It carries out the reaction indole-3-pyruvate + H(+) = indole-3-acetaldehyde + CO2. The protein operates within plant hormone metabolism; auxin biosynthesis. This chain is Indole-3-pyruvate decarboxylase (ipdC), found in Azospirillum brasilense.